The following is a 538-amino-acid chain: C-22 sterol desaturase ERG5 (538 aa).

A helical transmembrane segment spans residues 46-66 (LKIFATLICILLVWDQVAYQI). Residues K164 and K198 each participate in a glycyl lysine isopeptide (Lys-Gly) (interchain with G-Cter in ubiquitin) cross-link. Position 476 (C476) interacts with heme.

It belongs to the cytochrome P450 family. In terms of assembly, interacts with ERG28. It depends on heme as a cofactor.

The protein localises to the endoplasmic reticulum membrane. It catalyses the reaction 5-dehydroepisterol + NADPH + O2 + H(+) = ergosta-5,7,22,24(28)-tetraen-3beta-ol + NADP(+) + 2 H2O. It functions in the pathway steroid metabolism; ergosterol biosynthesis; ergosterol from zymosterol: step 4/5. C-22 sterol desaturase; part of the third module of ergosterol biosynthesis pathway that includes the late steps of the pathway. ERG5 converts 5-dehydroepisterol into ergosta-5,7,22,24(28)-tetraen-3beta-ol by forming the C-22(23) double bond in the sterol side chain. The third module or late pathway involves the ergosterol synthesis itself through consecutive reactions that mainly occur in the endoplasmic reticulum (ER) membrane. Firstly, the squalene synthase ERG9 catalyzes the condensation of 2 farnesyl pyrophosphate moieties to form squalene, which is the precursor of all steroids. Squalene synthase is crucial for balancing the incorporation of farnesyl diphosphate (FPP) into sterol and nonsterol isoprene synthesis. Secondly, the squalene epoxidase ERG1 catalyzes the stereospecific oxidation of squalene to (S)-2,3-epoxysqualene, which is considered to be a rate-limiting enzyme in steroid biosynthesis. Then, the lanosterol synthase ERG7 catalyzes the cyclization of (S)-2,3 oxidosqualene to lanosterol, a reaction that forms the sterol core. In the next steps, lanosterol is transformed to zymosterol through a complex process involving various demethylation, reduction and desaturation reactions. The lanosterol 14-alpha-demethylase ERG11 (also known as CYP51) catalyzes C14-demethylation of lanosterol to produce 4,4'-dimethyl cholesta-8,14,24-triene-3-beta-ol, which is critical for ergosterol biosynthesis. The C-14 reductase ERG24 reduces the C14=C15 double bond of 4,4-dimethyl-cholesta-8,14,24-trienol to produce 4,4-dimethyl-cholesta-8,24-dienol. 4,4-dimethyl-cholesta-8,24-dienol is substrate of the C-4 demethylation complex ERG25-ERG26-ERG27 in which ERG25 catalyzes the three-step monooxygenation required for the demethylation of 4,4-dimethyl and 4alpha-methylsterols, ERG26 catalyzes the oxidative decarboxylation that results in a reduction of the 3-beta-hydroxy group at the C-3 carbon to an oxo group, and ERG27 is responsible for the reduction of the keto group on the C-3. ERG28 has a role as a scaffold to help anchor ERG25, ERG26 and ERG27 to the endoplasmic reticulum and ERG29 regulates the activity of the iron-containing C4-methylsterol oxidase ERG25. Then, the sterol 24-C-methyltransferase ERG6 catalyzes the methyl transfer from S-adenosyl-methionine to the C-24 of zymosterol to form fecosterol. The C-8 sterol isomerase ERG2 catalyzes the reaction which results in unsaturation at C-7 in the B ring of sterols and thus converts fecosterol to episterol. The sterol-C5-desaturase ERG3 then catalyzes the introduction of a C-5 double bond in the B ring to produce 5-dehydroepisterol. The C-22 sterol desaturase ERG5 further converts 5-dehydroepisterol into ergosta-5,7,22,24(28)-tetraen-3beta-ol by forming the C-22(23) double bond in the sterol side chain. Finally, ergosta-5,7,22,24(28)-tetraen-3beta-ol is substrate of the C-24(28) sterol reductase ERG4 to produce ergosterol. The sequence is that of C-22 sterol desaturase ERG5 from Saccharomyces cerevisiae (strain ATCC 204508 / S288c) (Baker's yeast).